A 370-amino-acid chain; its full sequence is Glutamine synthetase (370 aa).

A GS beta-grasp domain is found at 23 to 102 (VLAEYVWIDA…VLTECWNNDG (80 aa)). The segment at 40-69 (CKTLDKKPSSVEDLPEWNFDGSSTGQAPGH) is disordered. Residues 109-370 (HRHESAKLMK…FKEYARESSD (262 aa)) enclose the GS catalytic domain.

Belongs to the glutamine synthetase family. As to quaternary structure, homooctamer.

Its subcellular location is the cytoplasm. The catalysed reaction is L-glutamate + NH4(+) + ATP = L-glutamine + ADP + phosphate + H(+). This chain is Glutamine synthetase (GLN1), found in Debaryomyces hansenii (strain ATCC 36239 / CBS 767 / BCRC 21394 / JCM 1990 / NBRC 0083 / IGC 2968) (Yeast).